Here is a 225-residue protein sequence, read N- to C-terminus: Ribosome maturation factor RimM (225 aa).

The PRC barrel domain maps to 144–225 (ADEFYWVDLI…RIVVDWEADY (82 aa)).

It belongs to the RimM family. As to quaternary structure, binds ribosomal protein uS19.

The protein resides in the cytoplasm. Functionally, an accessory protein needed during the final step in the assembly of 30S ribosomal subunit, possibly for assembly of the head region. Essential for efficient processing of 16S rRNA. May be needed both before and after RbfA during the maturation of 16S rRNA. It has affinity for free ribosomal 30S subunits but not for 70S ribosomes. The polypeptide is Ribosome maturation factor RimM (Burkholderia lata (strain ATCC 17760 / DSM 23089 / LMG 22485 / NCIMB 9086 / R18194 / 383)).